Reading from the N-terminus, the 439-residue chain is Guanine deaminase (439 aa).

His-82 and His-84 together coordinate Zn(2+). Residues 84–87 (HYPQ), 209–210 (RF), 237–240 (HLCE), and Asp-327 each bind substrate. Residues His-237 and Asp-327 each coordinate Zn(2+).

It belongs to the metallo-dependent hydrolases superfamily. ATZ/TRZ family. Zn(2+) serves as cofactor.

It catalyses the reaction guanine + H2O + H(+) = xanthine + NH4(+). It functions in the pathway purine metabolism; guanine degradation; xanthine from guanine: step 1/1. Its function is as follows. Catalyzes the hydrolytic deamination of guanine, producing xanthine and ammonia. The sequence is that of Guanine deaminase (guaD) from Escherichia coli (strain K12).